Consider the following 936-residue polypeptide: E3 ubiquitin-protein ligase ZNRF3 (936 aa).

The segment at 1–31 is disordered; it reads MRPRSGGRPGATGRRRRRLRRRPRGLRCSRL. The signal sequence occupies residues 1-55; the sequence is MRPRSGGRPGATGRRRRRLRRRPRGLRCSRLPPPPPLPLLLGLLLAAAGPGAARA. Basic residues predominate over residues 13–27; that stretch reads GRRRRRLRRRPRGLR. The Extracellular portion of the chain corresponds to 56–219; sequence KETAFVEVVL…PRQPTEYFDM (164 aa). The chain crosses the membrane as a helical span at residues 220 to 240; sequence GIFLAFFVVVSLVCLILLVKI. At 241–936 the chain is on the cytoplasmic side; that stretch reads KLKQRRSQNS…HSADSSSPGA (696 aa). The segment at 293–334 adopts an RING-type; atypical zinc-finger fold; sequence CAICLEKYIDGEELRVIPCTHRFHRKCVDPWLLQHHTCPHCR. Disordered regions lie at residues 608-693, 739-758, 849-875, and 892-936; these read SEAG…SPGA, LYEGSGPAGGEPQSGSSQGL, THSLGSWGGTRGPDTPRPHRGLGATRE, and CPPE…SPGA. Residues 654–684 show a composition bias toward polar residues; the sequence is SGDQVSTCSLEMNYSSNSSLEHRGPNSSTSE. Residues 913 to 922 are compositionally biased toward low complexity; the sequence is ESSTTATEAA.

It belongs to the ZNRF3 family. In terms of assembly, interacts with LRP6, FZD4, FZD5, FZD6 and FZD8. Interacts with RSPO1; interaction promotes indirect interaction with LGR4 and membrane clearance of ZNRF3. Also interacts with RSPO2. Interacts with LMBR1L.

It is found in the cell membrane. It catalyses the reaction S-ubiquitinyl-[E2 ubiquitin-conjugating enzyme]-L-cysteine + [acceptor protein]-L-lysine = [E2 ubiquitin-conjugating enzyme]-L-cysteine + N(6)-ubiquitinyl-[acceptor protein]-L-lysine.. It participates in protein modification; protein ubiquitination. With respect to regulation, negatively regulated by R-spondin proteins such as RSPO1: interaction with RSPO1 induces the indirect association between ZNRF3 and LGR4, promoting membrane clearance of ZNRF3. E3 ubiquitin-protein ligase that acts as a negative regulator of the Wnt signaling pathway by mediating the ubiquitination and subsequent degradation of Wnt receptor complex components Frizzled and LRP6. Acts on both canonical and non-canonical Wnt signaling pathway. Acts as a tumor suppressor in the intestinal stem cell zone by inhibiting the Wnt signaling pathway, thereby restricting the size of the intestinal stem cell zone. Along with RSPO2 and RNF43, constitutes a master switch that governs limb specification. The protein is E3 ubiquitin-protein ligase ZNRF3 (ZNRF3) of Homo sapiens (Human).